The primary structure comprises 115 residues: Large ribosomal subunit protein bL19 (115 aa).

The protein belongs to the bacterial ribosomal protein bL19 family.

Functionally, this protein is located at the 30S-50S ribosomal subunit interface and may play a role in the structure and function of the aminoacyl-tRNA binding site. This is Large ribosomal subunit protein bL19 from Edwardsiella ictaluri (strain 93-146).